Consider the following 112-residue polypeptide: Nucleoid-associated protein FTN_1196 (112 aa).

The tract at residues 1–27 (MNFDMSKLMQQAQKMQEQMKKAQQERE) is disordered. Residues 17 to 27 (EQMKKAQQERE) show a composition bias toward basic and acidic residues.

This sequence belongs to the YbaB/EbfC family. In terms of assembly, homodimer.

Its subcellular location is the cytoplasm. The protein resides in the nucleoid. Its function is as follows. Binds to DNA and alters its conformation. May be involved in regulation of gene expression, nucleoid organization and DNA protection. The sequence is that of Nucleoid-associated protein FTN_1196 from Francisella tularensis subsp. novicida (strain U112).